A 143-amino-acid chain; its full sequence is Large ribosomal subunit protein uL11 (143 aa).

The protein belongs to the universal ribosomal protein uL11 family. In terms of assembly, part of the ribosomal stalk of the 50S ribosomal subunit. Interacts with L10 and the large rRNA to form the base of the stalk. L10 forms an elongated spine to which L12 dimers bind in a sequential fashion forming a multimeric L10(L12)X complex. In terms of processing, one or more lysine residues are methylated.

Functionally, forms part of the ribosomal stalk which helps the ribosome interact with GTP-bound translation factors. This chain is Large ribosomal subunit protein uL11, found in Rhizobium etli (strain ATCC 51251 / DSM 11541 / JCM 21823 / NBRC 15573 / CFN 42).